The sequence spans 131 residues: Large ribosomal subunit protein eL32 (131 aa).

The protein belongs to the eukaryotic ribosomal protein eL32 family.

This is Large ribosomal subunit protein eL32 (rpl32e) from Sulfurisphaera tokodaii (strain DSM 16993 / JCM 10545 / NBRC 100140 / 7) (Sulfolobus tokodaii).